A 92-amino-acid chain; its full sequence is Small ribosomal subunit protein uS19 (92 aa).

Belongs to the universal ribosomal protein uS19 family.

Its function is as follows. Protein S19 forms a complex with S13 that binds strongly to the 16S ribosomal RNA. In Vibrio vulnificus (strain CMCP6), this protein is Small ribosomal subunit protein uS19.